Here is a 246-residue protein sequence, read N- to C-terminus: 1-(5-phosphoribosyl)-5-[(5-phosphoribosylamino)methylideneamino] imidazole-4-carboxamide isomerase (246 aa).

Asp8 functions as the Proton acceptor in the catalytic mechanism. The active-site Proton donor is the Asp131.

It belongs to the HisA/HisF family.

It localises to the cytoplasm. It carries out the reaction 1-(5-phospho-beta-D-ribosyl)-5-[(5-phospho-beta-D-ribosylamino)methylideneamino]imidazole-4-carboxamide = 5-[(5-phospho-1-deoxy-D-ribulos-1-ylimino)methylamino]-1-(5-phospho-beta-D-ribosyl)imidazole-4-carboxamide. It functions in the pathway amino-acid biosynthesis; L-histidine biosynthesis; L-histidine from 5-phospho-alpha-D-ribose 1-diphosphate: step 4/9. In Lactococcus lactis subsp. cremoris (strain MG1363), this protein is 1-(5-phosphoribosyl)-5-[(5-phosphoribosylamino)methylideneamino] imidazole-4-carboxamide isomerase.